The primary structure comprises 1026 residues: Multidrug resistance protein MdtC (1026 aa).

The next 11 membrane-spanning stretches (helical) occupy residues 15-35 (ILIA…LPVA), 333-353 (EVEE…FLFL), 360-380 (LIPA…MYLC), 387-407 (LSLM…IVVL), 431-451 (VGFT…PLLL), 463-483 (FAVT…TLTP), 528-548 (LVGV…IAIP), 853-873 (LILI…LYES), 897-917 (LFNA…IGIV), 953-973 (PIMM…LSGG), and 984-1004 (ITIV…TPVV).

This sequence belongs to the resistance-nodulation-cell division (RND) (TC 2.A.6) family. MdtC subfamily. As to quaternary structure, part of a tripartite efflux system composed of MdtA, MdtB and MdtC. MdtC forms a heteromultimer with MdtB.

It localises to the cell inner membrane. This is Multidrug resistance protein MdtC from Salmonella newport (strain SL254).